The sequence spans 224 residues: Peroxiredoxin-6 (224 aa).

Residues 5–169 (LLLGDEAPNF…ILRVVISLQL (165 aa)) enclose the Thioredoxin domain. A required and sufficient for targeting to lysosomes and lamellar bodies region spans residues 31–40 (DSWGILFSHP). A Phosphothreonine modification is found at threonine 44. The Cysteine sulfenic acid (-SOH) intermediate; for peroxidase activity role is filled by cysteine 47. Lysine 63 carries the post-translational modification N6-acetyllysine. A Phosphotyrosine modification is found at tyrosine 89. The active-site For phospholipase activity is aspartate 140. Threonine 177 is subject to Phosphothreonine; by MAPK. An N6-acetyllysine; alternate modification is found at lysine 209. N6-succinyllysine; alternate is present on lysine 209.

Belongs to the peroxiredoxin family. Prx6 subfamily. As to quaternary structure, homodimer. Interacts with GSTP1; mediates PRDX6 glutathionylation and regeneration. Interacts with APEX1. Interacts with STH. May interact with FAM168B. May interact with HTR2A. Irreversibly inactivated by overoxidation of Cys-47 to sulfinic acid (Cys-SO(2)H) and sulfonic acid (Cys-SO(3)H) forms upon oxidative stress. In terms of processing, phosphorylation at Thr-177 by MAP kinases increases the phospholipase activity of the enzyme. The phosphorylated form exhibits a greater lysophosphatidylcholine acyltransferase activity compared to the non-phosphorylated form.

It is found in the cytoplasm. Its subcellular location is the lysosome. The enzyme catalyses a hydroperoxide + 2 glutathione = an alcohol + glutathione disulfide + H2O. It catalyses the reaction a 1,2-diacyl-sn-glycero-3-phosphocholine + H2O = a 1-acyl-sn-glycero-3-phosphocholine + a fatty acid + H(+). It carries out the reaction a 1-acyl-sn-glycero-3-phosphocholine + an acyl-CoA = a 1,2-diacyl-sn-glycero-3-phosphocholine + CoA. The catalysed reaction is 1-hexadecanoyl-sn-glycero-3-phosphocholine + hexadecanoyl-CoA = 1,2-dihexadecanoyl-sn-glycero-3-phosphocholine + CoA. The enzyme catalyses 1,2-dihexadecanoyl-sn-glycero-3-phosphocholine + H2O = 1-hexadecanoyl-sn-glycero-3-phosphocholine + hexadecanoate + H(+). Thiol-specific peroxidase that catalyzes the reduction of hydrogen peroxide and organic hydroperoxides to water and alcohols, respectively. Can reduce H(2)O(2) and short chain organic, fatty acid, and phospholipid hydroperoxides. Also has phospholipase activity, and can therefore either reduce the oxidized sn-2 fatty acyl group of phospholipids (peroxidase activity) or hydrolyze the sn-2 ester bond of phospholipids (phospholipase activity). These activities are dependent on binding to phospholipids at acidic pH and to oxidized phospholipds at cytosolic pH. Plays a role in cell protection against oxidative stress by detoxifying peroxides and in phospholipid homeostasis. Exhibits acyl-CoA-dependent lysophospholipid acyltransferase which mediates the conversion of lysophosphatidylcholine (1-acyl-sn-glycero-3-phosphocholine or LPC) into phosphatidylcholine (1,2-diacyl-sn-glycero-3-phosphocholine or PC). Shows a clear preference for LPC as the lysophospholipid and for palmitoyl CoA as the fatty acyl substrate. In Macaca fascicularis (Crab-eating macaque), this protein is Peroxiredoxin-6 (PRDX6).